We begin with the raw amino-acid sequence, 372 residues long: Probable dual-specificity RNA methyltransferase RlmN (372 aa).

Residue Glu106 is the Proton acceptor of the active site. The Radical SAM core domain maps to 112-359 (YPQRNTVCIS…SCTVRDTRGR (248 aa)). Cys119 and Cys365 are joined by a disulfide. Residues Cys126, Cys130, and Cys133 each contribute to the [4Fe-4S] cluster site. S-adenosyl-L-methionine contacts are provided by residues 186–187 (GE), Ser220, 243–245 (SLH), and Asn322. Cys365 serves as the catalytic S-methylcysteine intermediate.

This sequence belongs to the radical SAM superfamily. RlmN family. [4Fe-4S] cluster is required as a cofactor.

Its subcellular location is the cytoplasm. It catalyses the reaction adenosine(2503) in 23S rRNA + 2 reduced [2Fe-2S]-[ferredoxin] + 2 S-adenosyl-L-methionine = 2-methyladenosine(2503) in 23S rRNA + 5'-deoxyadenosine + L-methionine + 2 oxidized [2Fe-2S]-[ferredoxin] + S-adenosyl-L-homocysteine. The enzyme catalyses adenosine(37) in tRNA + 2 reduced [2Fe-2S]-[ferredoxin] + 2 S-adenosyl-L-methionine = 2-methyladenosine(37) in tRNA + 5'-deoxyadenosine + L-methionine + 2 oxidized [2Fe-2S]-[ferredoxin] + S-adenosyl-L-homocysteine. Its function is as follows. Specifically methylates position 2 of adenine 2503 in 23S rRNA and position 2 of adenine 37 in tRNAs. In Mycolicibacterium smegmatis (strain ATCC 700084 / mc(2)155) (Mycobacterium smegmatis), this protein is Probable dual-specificity RNA methyltransferase RlmN.